Reading from the N-terminus, the 136-residue chain is Flagellar basal-body rod protein FlgC (136 aa).

It belongs to the flagella basal body rod proteins family. The basal body constitutes a major portion of the flagellar organelle and consists of four rings (L,P,S, and M) mounted on a central rod. The rod consists of about 26 subunits of FlgG in the distal portion, and FlgB, FlgC and FlgF are thought to build up the proximal portion of the rod with about 6 subunits each.

The protein localises to the bacterial flagellum basal body. The chain is Flagellar basal-body rod protein FlgC (flgC) from Buchnera aphidicola subsp. Baizongia pistaciae (strain Bp).